The primary structure comprises 396 residues: Purine ribonucleoside efflux pump NepI (396 aa).

Residues 1 to 21 (MSEFIAENRGADAITRPNWSA) lie on the Cytoplasmic side of the membrane. The helical transmembrane segment at 22–42 (VFSVAFCVACLIIVEFLPVSL) threads the bilayer. At 43–54 (LTPMAQDLGISE) the chain is on the periplasmic side. Residues 55 to 75 (GVAGQSVTVTAFVAMFASLFI) form a helical membrane-spanning segment. At 76 to 85 (TQTIQATDRC) the chain is on the cytoplasmic side. Residues 86 to 106 (YVVILFAVLLTLSCLLVSFAN) traverse the membrane as a helical segment. A topological domain (periplasmic) is located at residue S107. A helical transmembrane segment spans residues 108 to 128 (FSLLLIGRACLGLALGGFWAM). Residues 129–147 (SASLTMRLVPPRTVPKALS) are Cytoplasmic-facing. Residues 148 to 168 (VIFGAVSIALVIAAPLGSFLG) form a helical membrane-spanning segment. At 169–175 (ELIGWRN) the chain is on the periplasmic side. The helical transmembrane segment at 176-196 (VFNAAAVMGVLCIFWIIKSLP) threads the bilayer. The Cytoplasmic segment spans residues 197 to 215 (SLPGEPSHQKQNTFRLLQR). A helical membrane pass occupies residues 216–236 (PGVMAGMIAIFMSFAGQFAFF). Over 237 to 255 (TYIRPVYMNLAGFGVDGLT) the chain is Periplasmic. Residues 256 to 276 (LVLLSFGIASFIGTSLSSFIL) form a helical membrane-spanning segment. Topologically, residues 277–281 (KRSVK) are cytoplasmic. The chain crosses the membrane as a helical span at residues 282 to 302 (LALAGAPLILAVSALVLTLWG). Residues 303–305 (SDK) are Periplasmic-facing. The chain crosses the membrane as a helical span at residues 306–326 (IVATGVAIIWGLTFALVPVGW). Residues 327 to 343 (STWITRSLADQAEKAGS) lie on the Cytoplasmic side of the membrane. A helical membrane pass occupies residues 344 to 364 (IQVAVIQLANTCGAAIGGYAL). Residues 365-366 (DN) lie on the Periplasmic side of the membrane. Residues 367–387 (IGLTSPLMLSGTLMLLTALLV) form a helical membrane-spanning segment. The Cytoplasmic portion of the chain corresponds to 388 to 396 (TAKVKMKKS).

The protein belongs to the major facilitator superfamily. DHA1 family. NepI (TC 2.A.1.2.26) subfamily.

It localises to the cell inner membrane. The catalysed reaction is inosine(in) + H(+)(out) = inosine(out) + H(+)(in). The enzyme catalyses guanosine(in) + H(+)(out) = guanosine(out) + H(+)(in). Involved in the efflux of purine ribonucleosides, such as inosine and guanosine. This chain is Purine ribonucleoside efflux pump NepI, found in Shigella boydii serotype 4 (strain Sb227).